The chain runs to 215 residues: Cytochrome b6 (215 aa).

The chain crosses the membrane as a helical span at residues 32–52 (IFYCLGGITLTCFLVQVATGF). Residue C35 participates in heme c binding. Positions 86 and 100 each coordinate heme b. A run of 3 helical transmembrane segments spans residues 90-110 (ASMM…TGGF), 116-136 (LTWV…VTGY), and 186-206 (LHTF…FPMI). The heme b site is built by H187 and H202.

The protein belongs to the cytochrome b family. PetB subfamily. The 4 large subunits of the cytochrome b6-f complex are cytochrome b6, subunit IV (17 kDa polypeptide, PetD), cytochrome f and the Rieske protein, while the 4 small subunits are PetG, PetL, PetM and PetN. The complex functions as a dimer. Requires heme b as cofactor. Heme c serves as cofactor.

It is found in the plastid. It localises to the chloroplast thylakoid membrane. Functionally, component of the cytochrome b6-f complex, which mediates electron transfer between photosystem II (PSII) and photosystem I (PSI), cyclic electron flow around PSI, and state transitions. This is Cytochrome b6 from Solanum bulbocastanum (Wild potato).